The following is a 546-amino-acid chain: Glucose-6-phosphate isomerase (546 aa).

The active-site Proton donor is the Glu-358. Catalysis depends on residues His-389 and Lys-504.

It belongs to the GPI family.

It localises to the cytoplasm. The enzyme catalyses alpha-D-glucose 6-phosphate = beta-D-fructose 6-phosphate. It participates in carbohydrate biosynthesis; gluconeogenesis. The protein operates within carbohydrate degradation; glycolysis; D-glyceraldehyde 3-phosphate and glycerone phosphate from D-glucose: step 2/4. Catalyzes the reversible isomerization of glucose-6-phosphate to fructose-6-phosphate. The polypeptide is Glucose-6-phosphate isomerase (Desulfosudis oleivorans (strain DSM 6200 / JCM 39069 / Hxd3) (Desulfococcus oleovorans)).